The following is a 585-amino-acid chain: Packaging protein UL32 (585 aa).

Residues 1 to 25 form a disordered region; the sequence is MDRVESEEPMDGFESPVFSENTSSN. Zn(2+) is bound by residues Cys107, Cys110, His187, Cys193, Cys408, Cys411, His484, and Cys491. 2 zinc finger regions span residues 107–193 and 408–491; these read CLVC…LHVC and CMLC…DLLC.

The protein belongs to the herpesviridae UL32 protein family.

The protein resides in the host cytoplasm. Its subcellular location is the host nucleus. Its function is as follows. Plays a role in efficient localization of neo-synthesized capsids to nuclear replication compartments, thereby controlling cleavage and packaging of virus genomic DNA. This Varicella-zoster virus (strain Dumas) (HHV-3) protein is Packaging protein UL32 (26).